The following is a 428-amino-acid chain: Histidinol dehydrogenase (428 aa).

Positions 127, 185, and 208 each coordinate NAD(+). Substrate contacts are provided by serine 232, glutamine 254, and histidine 257. Positions 254 and 257 each coordinate Zn(2+). Active-site proton acceptor residues include glutamate 321 and histidine 322. Substrate-binding residues include histidine 322, aspartate 355, glutamate 409, and histidine 414. Residue aspartate 355 coordinates Zn(2+). Histidine 414 serves as a coordination point for Zn(2+).

Belongs to the histidinol dehydrogenase family. Requires Zn(2+) as cofactor.

It catalyses the reaction L-histidinol + 2 NAD(+) + H2O = L-histidine + 2 NADH + 3 H(+). It functions in the pathway amino-acid biosynthesis; L-histidine biosynthesis; L-histidine from 5-phospho-alpha-D-ribose 1-diphosphate: step 9/9. Its function is as follows. Catalyzes the sequential NAD-dependent oxidations of L-histidinol to L-histidinaldehyde and then to L-histidine. The polypeptide is Histidinol dehydrogenase (Pasteurella multocida (strain Pm70)).